We begin with the raw amino-acid sequence, 262 residues long: Acyl-[acyl-carrier-protein]--UDP-N-acetylglucosamine O-acyltransferase (262 aa).

Belongs to the transferase hexapeptide repeat family. LpxA subfamily. As to quaternary structure, homotrimer.

The protein localises to the cytoplasm. It carries out the reaction a (3R)-hydroxyacyl-[ACP] + UDP-N-acetyl-alpha-D-glucosamine = a UDP-3-O-[(3R)-3-hydroxyacyl]-N-acetyl-alpha-D-glucosamine + holo-[ACP]. Its pathway is glycolipid biosynthesis; lipid IV(A) biosynthesis; lipid IV(A) from (3R)-3-hydroxytetradecanoyl-[acyl-carrier-protein] and UDP-N-acetyl-alpha-D-glucosamine: step 1/6. Involved in the biosynthesis of lipid A, a phosphorylated glycolipid that anchors the lipopolysaccharide to the outer membrane of the cell. The sequence is that of Acyl-[acyl-carrier-protein]--UDP-N-acetylglucosamine O-acyltransferase from Salmonella typhi.